The primary structure comprises 559 residues: Suppressor of tumorigenicity 7 protein-like (559 aa).

3 helical membrane-spanning segments follow: residues 39 to 59 (GLAN…LYAL), 83 to 103 (FYVA…IFEW), and 513 to 533 (LPFF…LAFL).

Belongs to the ST7 family. As to expression, ubiquitously expressed.

Its subcellular location is the membrane. This is Suppressor of tumorigenicity 7 protein-like (St7l) from Mus musculus (Mouse).